The sequence spans 586 residues: Protein NRT1/ PTR FAMILY 5.3 (586 aa).

11 consecutive transmembrane segments (helical) span residues 77–97 (WVGTSWLTPILGAYVADAHFG), 100–120 (ITFVISSAIYLLGMALLTLSV), 141–161 (ASVIQLAVFFGALYTLAIGTG), 189–209 (FFNWWMFSIFFGTFFATTVLV), 217–237 (WAIGYGLSTLGLAFSIFIFLL), 334–354 (PVLFVTFVPSMMLAQIMTLFI), 370–390 (IPPASLLGFTTFSMLVSIVIY), 408–428 (ITLLQRMGIGMILHILIMIIA), 449–469 (AVPIPLSIFTLLPQYVLMGLA), 492–512 (LGTSYTSTSMAVGYFMSSILL), and 538–558 (NYYMFFAVLNLLNFILFLVVI).

This sequence belongs to the major facilitator superfamily. Proton-dependent oligopeptide transporter (POT/PTR) (TC 2.A.17) family. Expressed in roots and siliques.

It is found in the membrane. Its function is as follows. Peptide transporter. The chain is Protein NRT1/ PTR FAMILY 5.3 (NPF5.3) from Arabidopsis thaliana (Mouse-ear cress).